Reading from the N-terminus, the 209-residue chain is Orotate phosphoribosyltransferase (209 aa).

5-phospho-alpha-D-ribose 1-diphosphate contacts are provided by residues Arg-96, Lys-100, His-102, and 122-130 (EDLISTGGS). Ser-126 is an orotate binding site.

Belongs to the purine/pyrimidine phosphoribosyltransferase family. PyrE subfamily. As to quaternary structure, homodimer. It depends on Mg(2+) as a cofactor.

It catalyses the reaction orotidine 5'-phosphate + diphosphate = orotate + 5-phospho-alpha-D-ribose 1-diphosphate. It functions in the pathway pyrimidine metabolism; UMP biosynthesis via de novo pathway; UMP from orotate: step 1/2. In terms of biological role, catalyzes the transfer of a ribosyl phosphate group from 5-phosphoribose 1-diphosphate to orotate, leading to the formation of orotidine monophosphate (OMP). In Streptococcus pyogenes serotype M1, this protein is Orotate phosphoribosyltransferase.